The chain runs to 447 residues: Kynurenine 3-monooxygenase (447 aa).

The protein belongs to the aromatic-ring hydroxylase family. KMO subfamily. Requires FAD as cofactor.

The enzyme catalyses L-kynurenine + NADPH + O2 + H(+) = 3-hydroxy-L-kynurenine + NADP(+) + H2O. Its pathway is cofactor biosynthesis; NAD(+) biosynthesis; quinolinate from L-kynurenine: step 1/3. Catalyzes the hydroxylation of L-kynurenine (L-Kyn) to form 3-hydroxy-L-kynurenine (L-3OHKyn). Required for synthesis of quinolinic acid. The chain is Kynurenine 3-monooxygenase from Flavobacterium psychrophilum (strain ATCC 49511 / DSM 21280 / CIP 103535 / JIP02/86).